The following is a 275-amino-acid chain: Polyamine aminopropyltransferase (275 aa).

The PABS domain occupies 2–235 (ELWFTEKQTK…GLWTFTIGSK (234 aa)). Gln-31 lines the S-methyl-5'-thioadenosine pocket. Spermidine-binding residues include His-62 and Asp-86. Residues Glu-106 and 137 to 138 (DG) contribute to the S-methyl-5'-thioadenosine site. Asp-155 functions as the Proton acceptor in the catalytic mechanism. A spermidine-binding site is contributed by 155–158 (DSTE). Pro-162 contacts S-methyl-5'-thioadenosine.

The protein belongs to the spermidine/spermine synthase family. As to quaternary structure, homodimer or homotetramer.

Its subcellular location is the cytoplasm. It carries out the reaction S-adenosyl 3-(methylsulfanyl)propylamine + putrescine = S-methyl-5'-thioadenosine + spermidine + H(+). It participates in amine and polyamine biosynthesis; spermidine biosynthesis; spermidine from putrescine: step 1/1. Functionally, catalyzes the irreversible transfer of a propylamine group from the amino donor S-adenosylmethioninamine (decarboxy-AdoMet) to putrescine (1,4-diaminobutane) to yield spermidine. The protein is Polyamine aminopropyltransferase of Bacillus cytotoxicus (strain DSM 22905 / CIP 110041 / 391-98 / NVH 391-98).